A 395-amino-acid chain; its full sequence is Elongation factor Tu (395 aa).

The 196-residue stretch at 10 to 205 folds into the tr-type G domain; that stretch reads KPHVNIGTIG…VDSYIPLPPR (196 aa). The G1 stretch occupies residues 19 to 26; sequence GHVDHGKT. Residue 19 to 26 participates in GTP binding; that stretch reads GHVDHGKT. A Mg(2+)-binding site is contributed by Thr26. The segment at 60 to 64 is G2; that stretch reads GITIN. Residues 81 to 84 are G3; it reads DCPG. Residues 81 to 85 and 136 to 139 contribute to the GTP site; these read DCPGH and NKVD. The interval 136 to 139 is G4; the sequence is NKVD. The interval 174–176 is G5; sequence SAT.

Belongs to the TRAFAC class translation factor GTPase superfamily. Classic translation factor GTPase family. EF-Tu/EF-1A subfamily. In terms of assembly, monomer.

The protein resides in the cytoplasm. It catalyses the reaction GTP + H2O = GDP + phosphate + H(+). Its function is as follows. GTP hydrolase that promotes the GTP-dependent binding of aminoacyl-tRNA to the A-site of ribosomes during protein biosynthesis. This Terrimonas ferruginea (Flavobacterium ferrugineum) protein is Elongation factor Tu.